Reading from the N-terminus, the 71-residue chain is MMSKLGALLIICLLLFPLTAVPLDGDQHADRPAERLQDDISSKHHPMFDAVRGCCHPSTCHMRKGCSRCCS.

Residues 1–20 (MMSKLGALLIICLLLFPLTA) form the signal peptide. Residues 21–52 (VPLDGDQHADRPAERLQDDISSKHHPMFDAVR) constitute a propeptide that is removed on maturation. Cystine bridges form between Cys54–Cys70, Cys55–Cys66, and Cys60–Cys69.

Belongs to the conotoxin M superfamily. In terms of tissue distribution, expressed by the venom duct.

The protein localises to the secreted. The protein is Conotoxin TxMMSK-05 of Conus textile (Cloth-of-gold cone).